Here is a 262-residue protein sequence, read N- to C-terminus: Small ribosomal subunit protein uS2 (262 aa).

This sequence belongs to the universal ribosomal protein uS2 family.

This chain is Small ribosomal subunit protein uS2, found in Borreliella afzelii (strain PKo) (Borrelia afzelii).